Here is a 206-residue protein sequence, read N- to C-terminus: Threonine efflux protein (206 aa).

A helical membrane pass occupies residues 1 to 21; that stretch reads MLMLFFTVAMVHIVALMSPGP. Topologically, residues 22–43 are periplasmic; it reads DFFFVSQTAVSRSRKEAMMGVL. Residues 44 to 64 traverse the membrane as a helical segment; that stretch reads GITCGVMVWAGVALLGLHLII. At 65–66 the chain is on the cytoplasmic side; it reads EK. The helical transmembrane segment at 67-87 threads the bilayer; sequence MAWLHTIIMVGGGLYLCWMGY. Topologically, residues 88-149 are periplasmic; that stretch reads QMLRGALKKQ…VGDNVGAAAR (62 aa). A helical transmembrane segment spans residues 150–173; that stretch reads WGIFALITLETLAWFTVVASLFAL. The Cytoplasmic portion of the chain corresponds to 174–206; that stretch reads PKMRRGYQRLAKWIDGFAGALFAGFGIHLIISR.

It belongs to the Rht family.

The protein resides in the cell inner membrane. Its function is as follows. Conducts the efflux of threonine. This chain is Threonine efflux protein (rhtC), found in Salmonella typhi.